We begin with the raw amino-acid sequence, 246 residues long: tRNA pseudouridine synthase A (246 aa).

Asp-53 serves as the catalytic Nucleophile. Position 111 (Tyr-111) interacts with substrate.

This sequence belongs to the tRNA pseudouridine synthase TruA family. In terms of assembly, homodimer.

The enzyme catalyses uridine(38/39/40) in tRNA = pseudouridine(38/39/40) in tRNA. Functionally, formation of pseudouridine at positions 38, 39 and 40 in the anticodon stem and loop of transfer RNAs. This Lysinibacillus sphaericus (strain C3-41) protein is tRNA pseudouridine synthase A.